The following is a 253-amino-acid chain: Ribosomal RNA small subunit methyltransferase A (253 aa).

Residues histidine 12, leucine 14, glycine 39, glutamate 60, aspartate 81, and asparagine 104 each contribute to the S-adenosyl-L-methionine site.

This sequence belongs to the class I-like SAM-binding methyltransferase superfamily. rRNA adenine N(6)-methyltransferase family. RsmA subfamily.

Its subcellular location is the cytoplasm. It carries out the reaction adenosine(1518)/adenosine(1519) in 16S rRNA + 4 S-adenosyl-L-methionine = N(6)-dimethyladenosine(1518)/N(6)-dimethyladenosine(1519) in 16S rRNA + 4 S-adenosyl-L-homocysteine + 4 H(+). Specifically dimethylates two adjacent adenosines (A1518 and A1519) in the loop of a conserved hairpin near the 3'-end of 16S rRNA in the 30S particle. May play a critical role in biogenesis of 30S subunits. The chain is Ribosomal RNA small subunit methyltransferase A from Acidovorax ebreus (strain TPSY) (Diaphorobacter sp. (strain TPSY)).